Here is a 316-residue protein sequence, read N- to C-terminus: Heme oxygenase 2 (316 aa).

Acidic residues predominate over residues 1-12; sequence MSAEVETSEGVD. The tract at residues 1 to 29 is disordered; that stretch reads MSAEVETSEGVDESEKKNSGALEKENQMR. Position 2 is an N-acetylserine (S2). S2 is subject to Phosphoserine. Residues 13-27 are compositionally biased toward basic and acidic residues; sequence ESEKKNSGALEKENQ. H45 is a heme b binding site. HRM repeat units lie at residues 264-269 and 281-286; these read KCPFYA and SCPFRT. Residues C265 and C282 each carry the S-nitrosocysteine modification.

It belongs to the heme oxygenase family. Post-translationally, S-nitrosylated by BLVRB.

The protein resides in the microsome. The protein localises to the endoplasmic reticulum. The enzyme catalyses heme b + 3 reduced [NADPH--hemoprotein reductase] + 3 O2 = biliverdin IXalpha + CO + Fe(2+) + 3 oxidized [NADPH--hemoprotein reductase] + 3 H2O + H(+). In terms of biological role, heme oxygenase cleaves the heme ring at the alpha methene bridge to form biliverdin. Biliverdin is subsequently converted to bilirubin by biliverdin reductase. Under physiological conditions, the activity of heme oxygenase is highest in the spleen, where senescent erythrocytes are sequestrated and destroyed. Heme oxygenase 2 could be implicated in the production of carbon monoxide in brain where it could act as a neurotransmitter. This Macaca fascicularis (Crab-eating macaque) protein is Heme oxygenase 2 (HMOX2).